A 1203-amino-acid chain; its full sequence is DNA-directed RNA polymerase subunit beta' (1203 aa).

Residues C60, C62, C75, and C78 each contribute to the Zn(2+) site. 3 residues coordinate Mg(2+): D449, D451, and D453. C818, C892, C899, and C902 together coordinate Zn(2+).

This sequence belongs to the RNA polymerase beta' chain family. As to quaternary structure, the RNAP catalytic core consists of 2 alpha, 1 beta, 1 beta' and 1 omega subunit. When a sigma factor is associated with the core the holoenzyme is formed, which can initiate transcription. Requires Mg(2+) as cofactor. It depends on Zn(2+) as a cofactor.

The enzyme catalyses RNA(n) + a ribonucleoside 5'-triphosphate = RNA(n+1) + diphosphate. Its function is as follows. DNA-dependent RNA polymerase catalyzes the transcription of DNA into RNA using the four ribonucleoside triphosphates as substrates. This is DNA-directed RNA polymerase subunit beta' from Bacillus anthracis.